Consider the following 961-residue polypeptide: Copper-exporting P-type ATPase (961 aa).

HMA domains are found at residues 3-64 and 69-130; these read QTTL…YQAT and PDVE…YHAT. Cu(+)-binding residues include cysteine 14, cysteine 17, cysteine 80, and cysteine 83. Disordered stretches follow at residues 131 to 153 and 178 to 201; these read QQGIDSPKTEPLTHSAQSQPESL and VLPTNTALPTNTTSTTSTADTASA. Polar residues predominate over residues 142-151; that stretch reads LTHSAQSQPE. The 64-residue stretch at 226–289 folds into the HMA 3 domain; that stretch reads ESVQLLLTGM…AVKNAGYGAE (64 aa). Cu(+) is bound by residues cysteine 237 and cysteine 240. 5 helical membrane-spanning segments follow: residues 316–336, 345–365, 381–401, 565–585, and 592–612; these read AALGLLLGIPLMAWGLFGGSM, PWLIIGIITLLVMIFAGGHFY, TLVALGTGAAWIYSITVNIWP, AVFVPTVVVIAIVAGLIWYFF, and VYTLVVATTVLIIACPCALGL. Aspartate 650 (4-aspartylphosphate intermediate) is an active-site residue. 2 residues coordinate Mg(2+): aspartate 847 and aspartate 851. Helical transmembrane passes span 860-880, 906-926, and 928-948; these read VGIAMGGGSDIAIETAAITLM, LGAFFYNALGIPIAAGILYPF, and GTLLSPVVAGAAMALSSITVV.

The protein belongs to the cation transport ATPase (P-type) (TC 3.A.3) family. Type IB subfamily.

The protein localises to the cell membrane. The catalysed reaction is Cu(+)(in) + ATP + H2O = Cu(+)(out) + ADP + phosphate + H(+). Functionally, involved in copper export. The chain is Copper-exporting P-type ATPase (copA) from Yersinia pestis.